The sequence spans 476 residues: Glycogen synthase (476 aa).

Lys-15 contributes to the ADP-alpha-D-glucose binding site.

The protein belongs to the glycosyltransferase 1 family. Bacterial/plant glycogen synthase subfamily.

The enzyme catalyses [(1-&gt;4)-alpha-D-glucosyl](n) + ADP-alpha-D-glucose = [(1-&gt;4)-alpha-D-glucosyl](n+1) + ADP + H(+). The protein operates within glycan biosynthesis; glycogen biosynthesis. Synthesizes alpha-1,4-glucan chains using ADP-glucose. The sequence is that of Glycogen synthase from Mycoplasma mobile (strain ATCC 43663 / 163K / NCTC 11711) (Mesomycoplasma mobile).